The sequence spans 179 residues: Coatomer subunit zeta-2 (179 aa).

It belongs to the adaptor complexes small subunit family. Oligomeric complex that consists of at least the alpha, beta, beta', gamma, delta, epsilon and zeta subunits.

The protein resides in the cytoplasm. The protein localises to the golgi apparatus membrane. Its subcellular location is the cytoplasmic vesicle. It localises to the COPI-coated vesicle membrane. The coatomer is a cytosolic protein complex that binds to dilysine motifs and reversibly associates with Golgi non-clathrin-coated vesicles, which further mediate biosynthetic protein transport from the ER, via the Golgi up to the trans Golgi network. Coatomer complex is required for budding from Golgi membranes, and is essential for the retrograde Golgi-to-ER transport of dilysine-tagged proteins. The zeta subunit may be involved in regulating the coat assembly and, hence, the rate of biosynthetic protein transport due to its association-dissociation properties with the coatomer complex. The protein is Coatomer subunit zeta-2 of Arabidopsis thaliana (Mouse-ear cress).